A 162-amino-acid chain; its full sequence is Peptide methionine sulfoxide reductase MsrA (162 aa).

Cysteine 16 is an active-site residue.

It belongs to the MsrA Met sulfoxide reductase family.

The catalysed reaction is L-methionyl-[protein] + [thioredoxin]-disulfide + H2O = L-methionyl-(S)-S-oxide-[protein] + [thioredoxin]-dithiol. The enzyme catalyses [thioredoxin]-disulfide + L-methionine + H2O = L-methionine (S)-S-oxide + [thioredoxin]-dithiol. Functionally, has an important function as a repair enzyme for proteins that have been inactivated by oxidation. Catalyzes the reversible oxidation-reduction of methionine sulfoxide in proteins to methionine. The protein is Peptide methionine sulfoxide reductase MsrA of Geobacter metallireducens (strain ATCC 53774 / DSM 7210 / GS-15).